The following is a 274-amino-acid chain: Type III pantothenate kinase (274 aa).

An ATP-binding site is contributed by 6 to 13 (DVGNTNTV). Substrate-binding positions include tyrosine 110 and 117-120 (GADR). Aspartate 119 serves as the catalytic Proton acceptor. Aspartate 139 contacts K(+). Threonine 142 lines the ATP pocket. Threonine 194 provides a ligand contact to substrate.

Belongs to the type III pantothenate kinase family. As to quaternary structure, homodimer. NH4(+) serves as cofactor. K(+) is required as a cofactor.

The protein resides in the cytoplasm. The catalysed reaction is (R)-pantothenate + ATP = (R)-4'-phosphopantothenate + ADP + H(+). It participates in cofactor biosynthesis; coenzyme A biosynthesis; CoA from (R)-pantothenate: step 1/5. Its function is as follows. Catalyzes the phosphorylation of pantothenate (Pan), the first step in CoA biosynthesis. This Koribacter versatilis (strain Ellin345) protein is Type III pantothenate kinase.